Here is a 254-residue protein sequence, read N- to C-terminus: 5-oxoprolinase subunit A (254 aa).

It belongs to the LamB/PxpA family. As to quaternary structure, forms a complex composed of PxpA, PxpB and PxpC.

The catalysed reaction is 5-oxo-L-proline + ATP + 2 H2O = L-glutamate + ADP + phosphate + H(+). Catalyzes the cleavage of 5-oxoproline to form L-glutamate coupled to the hydrolysis of ATP to ADP and inorganic phosphate. The sequence is that of 5-oxoprolinase subunit A from Acinetobacter baylyi (strain ATCC 33305 / BD413 / ADP1).